The following is a 485-amino-acid chain: Glutamyl-tRNA(Gln) amidotransferase subunit A (485 aa).

Residues Lys-78 and Ser-153 each act as charge relay system in the active site. Residue Ser-177 is the Acyl-ester intermediate of the active site.

This sequence belongs to the amidase family. GatA subfamily. Heterotrimer of A, B and C subunits.

The enzyme catalyses L-glutamyl-tRNA(Gln) + L-glutamine + ATP + H2O = L-glutaminyl-tRNA(Gln) + L-glutamate + ADP + phosphate + H(+). Allows the formation of correctly charged Gln-tRNA(Gln) through the transamidation of misacylated Glu-tRNA(Gln) in organisms which lack glutaminyl-tRNA synthetase. The reaction takes place in the presence of glutamine and ATP through an activated gamma-phospho-Glu-tRNA(Gln). This is Glutamyl-tRNA(Gln) amidotransferase subunit A from Pelobacter propionicus (strain DSM 2379 / NBRC 103807 / OttBd1).